The primary structure comprises 170 residues: MSVLEVVLYPDEGLAKVCEPVAQVDDELNQFIDDMFDTMYEHEGIGLAAPQVGVLKRVITIDIEGDKTNQVVLINPEILESCGETGIEEGCLSIPGHRALVPRKEKVKVKALNRKGEEVIYEADGLFAICIQHEIDHLNGVLFVDHISALKRQRIKEKMQKLKKQIERAK.

Residues Cys-91 and His-133 each coordinate Fe cation. Glu-134 is an active-site residue. Residue His-137 participates in Fe cation binding.

Belongs to the polypeptide deformylase family. Fe(2+) is required as a cofactor.

The enzyme catalyses N-terminal N-formyl-L-methionyl-[peptide] + H2O = N-terminal L-methionyl-[peptide] + formate. Its function is as follows. Removes the formyl group from the N-terminal Met of newly synthesized proteins. Requires at least a dipeptide for an efficient rate of reaction. N-terminal L-methionine is a prerequisite for activity but the enzyme has broad specificity at other positions. This chain is Peptide deformylase, found in Actinobacillus pleuropneumoniae serotype 7 (strain AP76).